A 339-amino-acid chain; its full sequence is Phosphate acyltransferase (339 aa).

It belongs to the PlsX family. Homodimer. Probably interacts with PlsY.

The protein localises to the cytoplasm. It carries out the reaction a fatty acyl-[ACP] + phosphate = an acyl phosphate + holo-[ACP]. It participates in lipid metabolism; phospholipid metabolism. Catalyzes the reversible formation of acyl-phosphate (acyl-PO(4)) from acyl-[acyl-carrier-protein] (acyl-ACP). This enzyme utilizes acyl-ACP as fatty acyl donor, but not acyl-CoA. In Moorella thermoacetica (strain ATCC 39073 / JCM 9320), this protein is Phosphate acyltransferase.